The following is a 279-amino-acid chain: MGTKVKIGIIGGSGLDDSQIIENRTERVVNTHFGIPSDVLIEGKIAGVECVLLARHGRNHSIMPTNVNYRANIWALKTLGCTHVLVSTATGSLRDEIHPGDIVIPDNFIDRTTKRVQTFYDGNELLVGVCHIPMEPAFCSRTRDVLIETARELGIAGVHNSGTVVTIEGPRFSSKAESNLFRQWGAHLVNMTLVPEVVLAKEAGLCYAAIAMATDYDCWRETGEDVNVADVLATFKKNVTKVTELIINAIPKIAALDWTETIEELAKTVNTSIMLPHSN.

Phosphate-binding positions include S13, 55 to 56 (RH), and 88 to 89 (TA). Residue M191 participates in substrate binding. T192 contributes to the phosphate binding site. 215–217 (DYD) provides a ligand contact to substrate.

This sequence belongs to the PNP/MTAP phosphorylase family. MTAP subfamily. As to quaternary structure, homotrimer.

The protein resides in the cytoplasm. It is found in the nucleus. The enzyme catalyses S-methyl-5'-thioadenosine + phosphate = 5-(methylsulfanyl)-alpha-D-ribose 1-phosphate + adenine. It functions in the pathway amino-acid biosynthesis; L-methionine biosynthesis via salvage pathway; S-methyl-5-thio-alpha-D-ribose 1-phosphate from S-methyl-5'-thioadenosine (phosphorylase route): step 1/1. Its function is as follows. Catalyzes the reversible phosphorylation of S-methyl-5'-thioadenosine (MTA) to adenine and 5-methylthioribose-1-phosphate. Involved in the breakdown of MTA, a major by-product of polyamine biosynthesis. Responsible for the first step in the methionine salvage pathway after MTA has been generated from S-adenosylmethionine. Has broad substrate specificity with 6-aminopurine nucleosides as preferred substrates. The protein is S-methyl-5'-thioadenosine phosphorylase of Anopheles darlingi (Mosquito).